The primary structure comprises 148 residues: Large ribosomal subunit protein bL9 (148 aa).

The protein belongs to the bacterial ribosomal protein bL9 family.

Its function is as follows. Binds to the 23S rRNA. This Staphylococcus saprophyticus subsp. saprophyticus (strain ATCC 15305 / DSM 20229 / NCIMB 8711 / NCTC 7292 / S-41) protein is Large ribosomal subunit protein bL9.